The sequence spans 532 residues: GH3 domain-containing protein (532 aa).

The first 18 residues, 1–18, serve as a signal peptide directing secretion; the sequence is MLLLWLLLLLLLLVPLLA. The interval 100 to 123 is disordered; it reads LTQTSHTQEQESEETLPSPASPQY. Asn-356 and Asn-451 each carry an N-linked (GlcNAc...) asparagine glycan.

This sequence belongs to the GH3 family. In terms of tissue distribution, highly expressed in mammary tissues from mature virgins and at day 13 of pregnancy, and at lower level during lactation. Expressed at intermediate level in liver. Expressed at lower level in kidney, heart and brain.

It localises to the endoplasmic reticulum. The protein resides in the nucleus envelope. This Mus musculus (Mouse) protein is GH3 domain-containing protein (Ghdc).